The primary structure comprises 402 residues: Multidrug resistance protein MdtH (402 aa).

Residues 1–12 (MSRVSQARNLGK) lie on the Cytoplasmic side of the membrane. A helical membrane pass occupies residues 13 to 33 (YFLLIDNMLVVLGFFVVFPLI). Over 34 to 98 (SIRFVDQMGW…GFATMGIAHE (65 aa)) the chain is Periplasmic. The chain crosses the membrane as a helical span at residues 99–116 (PWLLWFSCLLSGLGGTLF). The Cytoplasmic segment spans residues 117–138 (DPPRSALVVKLIRPQQRGRFFS). The chain crosses the membrane as a helical span at residues 139–159 (LLMMQDSASAVIGALLGSWLL). Residues 160–164 (QYDFR) are Periplasmic-facing. Residues 165-185 (LVCATGAVLFVLCAAFNAWLL) traverse the membrane as a helical segment. Residues 186 to 213 (PAWKLSTVRTPVREGMTRVMRDKRFVTY) lie on the Cytoplasmic side of the membrane. The chain crosses the membrane as a helical span at residues 214–234 (VLTLAGYYMLAVQVMLMLPIM). At 235–243 (VNDVAGAPS) the chain is on the periplasmic side. A helical transmembrane segment spans residues 244–264 (AVKWMYAIEACLSLTLLYPIA). Residues 265–276 (RWSEKHFRLEHR) are Cytoplasmic-facing. Residues 277 to 297 (LMAGLLIMSLSMMPVGMVSGL) form a helical membrane-spanning segment. The Periplasmic portion of the chain corresponds to 298–299 (QQ). A helical membrane pass occupies residues 300-320 (LFTLICLFYIGSIIAEPARET). The Cytoplasmic portion of the chain corresponds to 321–339 (LSASLADARARGSYMGFSR). A helical membrane pass occupies residues 340–360 (LGLAIGGAIGYIGGGWLFDLG). Residues 361-367 (KSAHQPE) are Periplasmic-facing. The helical transmembrane segment at 368–388 (LPWMMLGIIGIFTFLALGWQF) threads the bilayer. The Cytoplasmic portion of the chain corresponds to 389 to 402 (SQKRAARRLLERDA).

The protein belongs to the major facilitator superfamily. DHA1 family. MdtH (TC 2.A.1.2.21) subfamily.

It is found in the cell inner membrane. The polypeptide is Multidrug resistance protein MdtH (Shigella flexneri).